The chain runs to 888 residues: 3-hydroxy-3-methylglutaryl-coenzyme A reductase (888 aa).

Residues 1-9 (MLSRLFRMH) are Cytoplasmic-facing. The helical transmembrane segment at 10–39 (GLFVASHPWEVIVGTVTLTICMMSMNMFTG) threads the bilayer. The Lumenal portion of the chain corresponds to 40 to 56 (NDKICGWNYECPKFEED). The chain crosses the membrane as a helical span at residues 57–78 (VLSSDIIILTITRCIAILYIYF). An SSD domain is found at 61–218 (DIIILTITRC…MTFFPACVSL (158 aa)). An INSIG-binding motif motif is present at residues 75–78 (YIYF). The Cytoplasmic segment spans residues 79-89 (QFQNLRQLGSK). Lysine 89 is covalently cross-linked (Glycyl lysine isopeptide (Lys-Gly) (interchain with G-Cter in ubiquitin)). A helical membrane pass occupies residues 90 to 114 (YILGIAGLFTIFSSFVFSTVVIHFL). At 115–123 (DKELTGLNE) the chain is on the lumenal side. Residues 124–149 (ALPFFLLLIDLSRASALAKFALSSNS) form a helical membrane-spanning segment. The Cytoplasmic portion of the chain corresponds to 150 to 159 (QDEVRENIAR). Residues 160–187 (GMAILGPTFTLDALVECLVIGVGTMSGV) traverse the membrane as a helical segment. At 188–191 (RQLE) the chain is on the lumenal side. Residues 192-220 (IMCCFGCMSVLANYFVFMTFFPACVSLVL) form a helical membrane-spanning segment. The Cytoplasmic segment spans residues 221 to 248 (ELSRESREGRPIWQLSHFARVLEEEENK). Lysine 248 participates in a covalent cross-link: Glycyl lysine isopeptide (Lys-Gly) (interchain with G-Cter in ubiquitin). A helical membrane pass occupies residues 249–275 (PNPVTQRVKMIMSLGLVLVHAHSRWIA). The Lumenal portion of the chain corresponds to 276–314 (DPSPQNSTADNSKVSLGLDENVSKRIEPSVSLWQFYLSK). Asparagine 281 and asparagine 296 each carry an N-linked (GlcNAc...) asparagine glycan. A helical membrane pass occupies residues 315-339 (MISMDIEQVITLSLALLLAVKYIFF). Residues 340–888 (EQAETESTLS…LEGACTKKAA (549 aa)) lie on the Cytoplasmic side of the membrane. Catalysis depends on charge relay system residues glutamate 559, lysine 691, and aspartate 767. Residue histidine 866 is the Proton donor of the active site. Serine 872 bears the Phosphoserine; by AMPK mark.

It belongs to the HMG-CoA reductase family. Homotetramer. Homodimer. Interacts (via its SSD) with INSIG1; the interaction, accelerated by sterols, leads to the recruitment of HMGCR to AMFR/gp78 for its ubiquitination by the sterol-mediated ERAD pathway. Interacts with UBIAD1. Undergoes sterol-mediated ubiquitination and ER-associated degradation (ERAD). Accumulation of sterols in the endoplasmic reticulum (ER) membrane, triggers binding of the reductase to the ER membrane protein INSIG1 or INSIG2. The INSIG1 binding leads to the recruitment of the ubiquitin ligase, AMFR/gp78, RNF139 or RNF145, initiating ubiquitination of the reductase. The ubiquitinated reductase is then extracted from the ER membrane and delivered to cytosolic 26S proteosomes by a mechanism probably mediated by the ATPase Valosin-containing protein VCP/p97. The INSIG2-binding leads to the recruitment of the ubiquitin ligase RNF139, initiating ubiquitination of the reductase. Lys-248 is the main site of ubiquitination. Ubiquitination is enhanced by the presence of a geranylgeranylated protein. In terms of processing, N-glycosylated. Deglycosylated by NGLY1 on release from the endoplasmic reticulum (ER) in a sterol-mediated manner. Post-translationally, phosphorylated. Phosphorylation at Ser-872 reduces the catalytic activity.

Its subcellular location is the endoplasmic reticulum membrane. It is found in the peroxisome membrane. It catalyses the reaction (R)-mevalonate + 2 NADP(+) + CoA = (3S)-3-hydroxy-3-methylglutaryl-CoA + 2 NADPH + 2 H(+). Its pathway is metabolic intermediate biosynthesis; (R)-mevalonate biosynthesis; (R)-mevalonate from acetyl-CoA: step 3/3. Regulated by a negative feedback mechanism through sterols and non-sterol metabolites derived from mevalonate. Phosphorylation at Ser-872 down-regulates the catalytic activity. Catalyzes the conversion of (3S)-hydroxy-3-methylglutaryl-CoA (HMG-CoA) to mevalonic acid, the rate-limiting step in the synthesis of cholesterol and other isoprenoids, thus plays a critical role in cellular cholesterol homeostasis. This chain is 3-hydroxy-3-methylglutaryl-coenzyme A reductase (HMGCR), found in Oryctolagus cuniculus (Rabbit).